A 300-amino-acid chain; its full sequence is 4-hydroxy-tetrahydrodipicolinate synthase (300 aa).

Residue Thr57 participates in pyruvate binding. Tyr145 serves as the catalytic Proton donor/acceptor. Lys173 functions as the Schiff-base intermediate with substrate in the catalytic mechanism. Ile213 serves as a coordination point for pyruvate.

Belongs to the DapA family. As to quaternary structure, homotetramer; dimer of dimers.

The protein localises to the cytoplasm. It catalyses the reaction L-aspartate 4-semialdehyde + pyruvate = (2S,4S)-4-hydroxy-2,3,4,5-tetrahydrodipicolinate + H2O + H(+). The protein operates within amino-acid biosynthesis; L-lysine biosynthesis via DAP pathway; (S)-tetrahydrodipicolinate from L-aspartate: step 3/4. Catalyzes the condensation of (S)-aspartate-beta-semialdehyde [(S)-ASA] and pyruvate to 4-hydroxy-tetrahydrodipicolinate (HTPA). This Corynebacterium jeikeium (strain K411) protein is 4-hydroxy-tetrahydrodipicolinate synthase.